Consider the following 261-residue polypeptide: Lys-63-specific deubiquitinase BRCC36 (261 aa).

Residues 6–149 (VHIQGDAFLV…YTCFQSVQAQ (144 aa)) enclose the MPN domain. Zn(2+) contacts are provided by His92, His94, and Asp105. The JAMM motif motif lies at 92-105 (HSHPHITVWPSHVD).

The protein belongs to the peptidase M67A family. BRCC36 subfamily. In terms of assembly, component of the BRCA1-A complex, at least composed of brca1, bard1, uimc1/rap80, abraxas1, brcc3/brcc36, babam2 and babam1/nba1. In the BRCA1-A complex, interacts directly with abraxas1 and babam2. Component of the BRISC complex, at least composed of abraxas2, brcc3/brcc36, babam2 and babam1/nba1. Within the complex, interacts directly with abraxas2. Both the BRCA1-A complex and the BRISC complex bind polyubiquitin. It depends on Zn(2+) as a cofactor.

The protein localises to the nucleus. It localises to the cytoplasm. Its subcellular location is the cytoskeleton. It is found in the spindle pole. Functionally, metalloprotease that specifically cleaves 'Lys-63'-linked polyubiquitin chains. Does not have activity toward 'Lys-48'-linked polyubiquitin chains. Component of the BRCA1-A complex, a complex that specifically recognizes 'Lys-63'-linked ubiquitinated histones H2A and H2AX at DNA lesions sites, leading to target the brca1-bard1 heterodimer to sites of DNA damage at double-strand breaks (DSBs). In the BRCA1-A complex, it specifically removes 'Lys-63'-linked ubiquitin on histones H2A and H2AX, antagonizing the rnf8-dependent ubiquitination at double-strand breaks (DSBs). Catalytic subunit of the BRISC complex, a multiprotein complex that specifically cleaves 'Lys-63'-linked ubiquitin in various substrates. Mediates the specific 'Lys-63'-specific deubiquitination associated with the COP9 signalosome complex (CSN), via the interaction of the BRISC complex with the CSN complex. The BRISC complex is required for normal mitotic spindle assembly and microtubule attachment to kinetochores via its role in deubiquitinating numa1. Plays a role in interferon signaling via its role in the deubiquitination of the interferon receptor ifnar1; deubiquitination increases ifnar1 activity by enhancing its stability and cell surface expression. Acts as a regulator of the NLRP3 inflammasome by mediating deubiquitination of nlrp3. Down-regulates the response to bacterial lipopolysaccharide (LPS) via its role in ifnar1 deubiquitination. This is Lys-63-specific deubiquitinase BRCC36 (brcc3) from Xenopus tropicalis (Western clawed frog).